The chain runs to 145 residues: MTLVKIGLWGGNGGSAQDISVPPKKLLGVTIYSSDAIRSIAFNYIGVDGQEYAIGPWGGGEGTSTEIKLGSSEHIKEISGTHGPVYDLADIVTYLKIVTSANNTYEAGVPNGKEFSIPLQDSGHVVGFFGRSGTLIDAIGIYVHP.

The Jacalin-type lectin domain occupies 3–145; the sequence is LVKIGLWGGN…IDAIGIYVHP (143 aa). A run of 2 repeats spans residues 6–15 and 54–64. The tract at residues 6 to 64 is 2 X approximate repeats, Gly-rich; that stretch reads IGLWGGNGGSAQDISVPPKKLLGVTIYSSDAIRSIAFNYIGVDGQEYAIGPWGGGEGTS.

Sheaths and roots from mature plants and seedlings.

The chain is Salt stress-induced protein (SALT) from Oryza sativa subsp. indica (Rice).